The following is a 366-amino-acid chain: Nitronate monooxygenase (366 aa).

Residues asparagine 74, glutamine 181, glycine 186, glycine 223, and glutamine 242–threonine 245 contribute to the FMN site.

The protein belongs to the nitronate monooxygenase family. NMO class I subfamily. It depends on FMN as a cofactor.

It catalyses the reaction 3 propionate 3-nitronate + 3 O2 + H2O = 3 3-oxopropanoate + 2 nitrate + nitrite + H2O2 + 3 H(+). In terms of biological role, nitronate monooxygenase that uses molecular oxygen to catalyze the oxidative denitrification of alkyl nitronates. Acts on propionate 3-nitronate (P3N), the presumed physiological substrate. Is likely involved in the degradation of P3N, that allows B.phytofirmans PsJN to grow on 3-nitropropionate/P3N as the sole source of nitrogen and carbon. Also probably functions in the detoxification of P3N, a metabolic poison produced by plants and fungi as a defense mechanism. Cannot oxidize nitroalkanes such as 3-nitropropionate, nitroethane, or 1-nitropropane. The sequence is that of Nitronate monooxygenase from Paraburkholderia phytofirmans (strain DSM 17436 / LMG 22146 / PsJN) (Burkholderia phytofirmans).